The following is a 166-amino-acid chain: MPIIYYVIFAILYYLPALVANGSAPFVKNGTPIDFRKNFVDGRRLLGDGKTFEGLLVAVTFGTTVGIILAKFLGIYWIYVSFIESLLAMLGDMVGAFIKRRLGLARGARAIGLDQLDFILGATLALIISKISLNIYEFLSIVVIAFVLHILTNNVAYRLKIKSVPW.

5 helical membrane-spanning segments follow: residues 1–21 (MPIIYYVIFAILYYLPALVAN), 55–75 (LLVAVTFGTTVGIILAKFLGI), 78–98 (IYVSFIESLLAMLGDMVGAFI), 110–130 (AIGLDQLDFILGATLALIISK), and 131–151 (ISLNIYEFLSIVVIAFVLHIL).

The protein belongs to the CDP-archaeol synthase family. Mg(2+) serves as cofactor.

It is found in the cell membrane. It carries out the reaction 2,3-bis-O-(geranylgeranyl)-sn-glycerol 1-phosphate + CTP + H(+) = CDP-2,3-bis-O-(geranylgeranyl)-sn-glycerol + diphosphate. It participates in membrane lipid metabolism; glycerophospholipid metabolism. Catalyzes the formation of CDP-2,3-bis-(O-geranylgeranyl)-sn-glycerol (CDP-archaeol) from 2,3-bis-(O-geranylgeranyl)-sn-glycerol 1-phosphate (DGGGP) and CTP. This reaction is the third ether-bond-formation step in the biosynthesis of archaeal membrane lipids. This chain is CDP-archaeol synthase, found in Sulfurisphaera tokodaii (strain DSM 16993 / JCM 10545 / NBRC 100140 / 7) (Sulfolobus tokodaii).